Consider the following 456-residue polypeptide: CBL-interacting protein kinase 9 (456 aa).

The Protein kinase domain occupies 27–282 (YELGKTIGEG…IAQILEDDWF (256 aa)). ATP is bound by residues 33–41 (IGEGSFAKV) and Lys-56. Asp-150 (proton acceptor) is an active-site residue. The tract at residues 168 to 197 (DFGLSAFAPQTKEDGLLHTACGTPNYVAPE) is activation loop. The 26-residue stretch at 318 to 343 (REKPESMNAFALISRSQGFNLGNLFE) folds into the NAF domain. The interval 351–380 (KRETSFTSQCTPQEIMSKIEEACGPLGFNV) is PPI.

It belongs to the protein kinase superfamily. CAMK Ser/Thr protein kinase family. SNF1 subfamily. Mn(2+) is required as a cofactor.

It catalyses the reaction L-seryl-[protein] + ATP = O-phospho-L-seryl-[protein] + ADP + H(+). The enzyme catalyses L-threonyl-[protein] + ATP = O-phospho-L-threonyl-[protein] + ADP + H(+). In terms of biological role, CIPK serine-threonine protein kinases interact with CBL proteins. Binding of a CBL protein to the regulatory NAF domain of CIPK protein lead to the activation of the kinase in a calcium-dependent manner. The sequence is that of CBL-interacting protein kinase 9 (CIPK9) from Oryza sativa subsp. japonica (Rice).